A 473-amino-acid chain; its full sequence is GDP-fucose protein O-fucosyltransferase 2 (473 aa).

An N-terminal signal peptide occupies residues 1–25 (MKNMIYNLISISLYSLIIILTDIYA). GDP-beta-L-fucose is bound by residues 59–63 (GEGFN), 283–285 (HLR), and 379–380 (RF). Catalysis depends on Glu60, which acts as the Proton acceptor.

The protein belongs to the glycosyltransferase 68 family.

The protein resides in the endoplasmic reticulum. It catalyses the reaction L-seryl-[protein] + GDP-beta-L-fucose = 3-O-(alpha-L-fucosyl)-L-seryl-[protein] + GDP + H(+). It carries out the reaction L-threonyl-[protein] + GDP-beta-L-fucose = 3-O-(alpha-L-fucosyl)-L-threonyl-[protein] + GDP + H(+). It participates in protein modification; protein glycosylation. Its function is as follows. Catalyzes the reaction that attaches fucose through an O-glycosidic linkage to a conserved serine or threonine residue in the consensus sequence C1-X-X-S/T-C2 of thrombospondin type I repeats (TSRs) where C1 and C2 are the first and second cysteines of the repeat, respectively. O-fucosylates sporozoite proteins CSP and TRAP. O-fucosylation regulates stability and intracellular trafficking of TRAP but not of CSP. Dispensable for parasite transmission to the mosquito vector and/or infection of the vertebrate host hepatocytes. The sequence is that of GDP-fucose protein O-fucosyltransferase 2 from Plasmodium berghei (strain Anka).